The sequence spans 472 residues: Chromosomal replication initiator protein DnaA (472 aa).

The interval methionine 1–glutamate 73 is domain I, interacts with DnaA modulators. The interval glutamate 73 to serine 128 is domain II. A disordered region spans residues valine 89–glycine 127. Positions alanine 97–serine 112 are enriched in basic and acidic residues. Residues histidine 113–alanine 124 show a composition bias toward low complexity. Residues proline 129 to serine 351 are domain III, AAA+ region. Glycine 176, glycine 178, lysine 179, and threonine 180 together coordinate ATP. The tract at residues lysine 352–glutamate 472 is domain IV, binds dsDNA.

It belongs to the DnaA family. Oligomerizes as a right-handed, spiral filament on DNA at oriC.

It localises to the cytoplasm. Its function is as follows. Plays an essential role in the initiation and regulation of chromosomal replication. ATP-DnaA binds to the origin of replication (oriC) to initiate formation of the DNA replication initiation complex once per cell cycle. Binds the DnaA box (a 9 base pair repeat at the origin) and separates the double-stranded (ds)DNA. Forms a right-handed helical filament on oriC DNA; dsDNA binds to the exterior of the filament while single-stranded (ss)DNA is stabiized in the filament's interior. The ATP-DnaA-oriC complex binds and stabilizes one strand of the AT-rich DNA unwinding element (DUE), permitting loading of DNA polymerase. After initiation quickly degrades to an ADP-DnaA complex that is not apt for DNA replication. Binds acidic phospholipids. In Rhodopseudomonas palustris (strain BisB5), this protein is Chromosomal replication initiator protein DnaA.